Reading from the N-terminus, the 684-residue chain is Coiled-coil domain-containing protein 62 (684 aa).

Coiled-coil stretches lie at residues 11 to 160 and 199 to 322; these read RQNI…QALT and TCIV…ESKA. The interval 579–603 is disordered; the sequence is SLGSSKSALREDETESSSNKKNSPT. Over residues 594–603 the composition is skewed to polar residues; sequence SSSNKKNSPT. Short sequence motifs (LXXLL motif) lie at residues 634–638 and 650–654; these read LQRLL and LSTLL. The tract at residues 657–684 is disordered; that stretch reads SHENLTGSATNKSEVPEESAQKNTFVSY. Over residues 659 to 669 the composition is skewed to polar residues; it reads ENLTGSATNKS.

In terms of assembly, interacts with ESR1 and ESR2 in the presence of estradiol/E2. The interaction with ESR2 recruits CCDC62 to ER target genes, including cyclin-D1/CCND1 AP-1 promoter. Interacts with GOPC. Highly expressed in adult testis. Expressed in both prostate epithelial and stromal cells, with predominant expression in epithelial cells (at protein level). Not detected in prostate by RT-PCR. Overexpressed in various cancers.

It is found in the cytoplasm. The protein localises to the nucleus. It localises to the cytoplasmic vesicle. The protein resides in the secretory vesicle. Its subcellular location is the acrosome. Nuclear receptor coactivator that can enhance preferentially estrogen receptors ESR1 and ESR2 transactivation. Also modulates progesterone/PGR, glucocorticoid/NR3C1 and androgen/AR receptors transactivation, although at lower level; little effect on vitamin D receptor/VDR. Required for normal spermiogenesis. It probably plays a role in acrosome formation. The sequence is that of Coiled-coil domain-containing protein 62 (CCDC62) from Homo sapiens (Human).